Here is a 310-residue protein sequence, read N- to C-terminus: Cytochrome f (310 aa).

An N-terminal signal peptide occupies residues 1–23 (MRRLIPILLGSLVLSLSILVAPA). The heme site is built by tyrosine 28, cysteine 48, cysteine 51, and histidine 52. Residues 277–297 (IYGLLAFFVAVSLAQILLVLK) traverse the membrane as a helical segment.

Belongs to the cytochrome f family. As to quaternary structure, the 4 large subunits of the cytochrome b6-f complex are cytochrome b6, subunit IV (17 kDa polypeptide, PetD), cytochrome f and the Rieske protein, while the 4 small subunits are PetG, PetL, PetM and PetN. The complex functions as a dimer. Heme serves as cofactor.

The protein resides in the cellular thylakoid membrane. Functionally, component of the cytochrome b6-f complex, which mediates electron transfer between photosystem II (PSII) and photosystem I (PSI), cyclic electron flow around PSI, and state transitions. This is Cytochrome f from Prochlorococcus marinus (strain MIT 9303).